The following is a 351-amino-acid chain: Probable cell division control protein 7 homolog 2 (351 aa).

A Protein kinase domain is found at tyrosine 21–phenylalanine 341. ATP is bound by residues isoleucine 27–valine 35 and lysine 50. Catalysis depends on aspartate 137, which acts as the Proton acceptor.

This sequence belongs to the protein kinase superfamily. Ser/Thr protein kinase family. CDC7 subfamily. Mg(2+) serves as cofactor.

The enzyme catalyses L-seryl-[protein] + ATP = O-phospho-L-seryl-[protein] + ADP + H(+). It carries out the reaction L-threonyl-[protein] + ATP = O-phospho-L-threonyl-[protein] + ADP + H(+). Its function is as follows. Serine/threonine-protein kinase. Needed for the initiation of DNA synthesis during mitosis as well as for synaptonemal complex formation and commitment to recombination during meiosis. The polypeptide is Probable cell division control protein 7 homolog 2 (CDC7-2) (Encephalitozoon cuniculi (strain GB-M1) (Microsporidian parasite)).